We begin with the raw amino-acid sequence, 1343 residues long: DNA-directed RNA polymerase subunit beta (1343 aa).

This sequence belongs to the RNA polymerase beta chain family. The RNAP catalytic core consists of 2 alpha, 1 beta, 1 beta' and 1 omega subunit. When a sigma factor is associated with the core the holoenzyme is formed, which can initiate transcription.

It carries out the reaction RNA(n) + a ribonucleoside 5'-triphosphate = RNA(n+1) + diphosphate. In terms of biological role, DNA-dependent RNA polymerase catalyzes the transcription of DNA into RNA using the four ribonucleoside triphosphates as substrates. The protein is DNA-directed RNA polymerase subunit beta of Shewanella violacea.